A 155-amino-acid chain; its full sequence is Ribosomal RNA large subunit methyltransferase H (155 aa).

S-adenosyl-L-methionine contacts are provided by residues Leu72, Gly103, and 122–127 (LSTLTL).

The protein belongs to the RNA methyltransferase RlmH family. As to quaternary structure, homodimer.

The protein localises to the cytoplasm. It catalyses the reaction pseudouridine(1915) in 23S rRNA + S-adenosyl-L-methionine = N(3)-methylpseudouridine(1915) in 23S rRNA + S-adenosyl-L-homocysteine + H(+). In terms of biological role, specifically methylates the pseudouridine at position 1915 (m3Psi1915) in 23S rRNA. The polypeptide is Ribosomal RNA large subunit methyltransferase H (Klebsiella pneumoniae (strain 342)).